The primary structure comprises 185 residues: Ribosome-recycling factor (185 aa).

This sequence belongs to the RRF family.

Its subcellular location is the cytoplasm. Its function is as follows. Responsible for the release of ribosomes from messenger RNA at the termination of protein biosynthesis. May increase the efficiency of translation by recycling ribosomes from one round of translation to another. In Streptomyces avermitilis (strain ATCC 31267 / DSM 46492 / JCM 5070 / NBRC 14893 / NCIMB 12804 / NRRL 8165 / MA-4680), this protein is Ribosome-recycling factor.